The chain runs to 150 residues: Small ribosomal subunit protein uS11y (150 aa).

Residues 129 to 150 (EDVTPVPTDSTRRKGGRRGRRL) are disordered. The span at 141–150 (RKGGRRGRRL) shows a compositional bias: basic residues.

This sequence belongs to the universal ribosomal protein uS11 family.

This is Small ribosomal subunit protein uS11y from Zea mays (Maize).